The primary structure comprises 444 residues: Adenine permease AdeQ (444 aa).

Residues 1 to 29 are Cytoplasmic-facing; the sequence is MNNDNTDYVSNESGTLSRLFKLPQHGTTV. The chain crosses the membrane as a helical span at residues 30–53; it reads RTELIAGMTTFLTMVYIVFVNPQI. Over 54–63 the chain is Periplasmic; sequence LGAAQMDPKV. The helical transmembrane segment at 64-82 threads the bilayer; the sequence is VFVTTCLIAGIGSIAMGIF. The Cytoplasmic segment spans residues 83-84; it reads AN. The chain crosses the membrane as a discontinuously helical span at residues 85-101; the sequence is LPVALAPAMGLNAFFAF. Over 102–113 the chain is Periplasmic; it reads VVVGAMGISWQT. The chain crosses the membrane as a helical span at residues 114 to 133; the sequence is GMGAIFWGAVGLFLLTLFRI. At 134 to 145 the chain is on the cytoplasmic side; it reads RYWMISNIPLSL. The helical transmembrane segment at 146 to 166 threads the bilayer; that stretch reads RIGITSGIGLFIALMGLKNTG. Residues 167–182 lie on the Periplasmic side of the membrane; it reads VIVANKDTLVMIGDLS. Residues 183 to 200 form a helical membrane-spanning segment; sequence SHGVLLGILGFFIITVLS. Residues 201–204 lie on the Cytoplasmic side of the membrane; it reads SRHF. A helical transmembrane segment spans residues 205 to 223; it reads HAAVLVSIVVTSCCGLFFG. The Periplasmic portion of the chain corresponds to 224–251; the sequence is DVHFSGVYSIPPDISGVIGEVDLSGALT. Residues 252–280 traverse the membrane as a helical segment; the sequence is LELAGIIFSFMLINLFDSSGTLIGVTDKA. Topologically, residues 281 to 293 are cytoplasmic; that stretch reads GLIDGNGKFPNMN. The chain crosses the membrane as a helical span at residues 294–309; it reads KALYVDSVSSVAGAFI. Residues 310-311 lie on the Periplasmic side of the membrane; sequence GT. Residues 312 to 327 form a discontinuously helical membrane-spanning segment; sequence SSVTAYIESTSGVAVG. The Cytoplasmic segment spans residues 328 to 331; that stretch reads GRTG. The helical transmembrane segment at 332-346 threads the bilayer; it reads LTAVVVGVMFLLVMF. At 347 to 357 the chain is on the periplasmic side; the sequence is FSPLVAIVPPY. The chain crosses the membrane as a helical span at residues 358-377; sequence ATAGALIFVGVLMTSSLARV. At 378–382 the chain is on the cytoplasmic side; sequence NWDDF. The segment at residues 383–418 is an intramembrane region (discontinuously helical); the sequence is TESVPAFITTVMMPFTFSITEGIALGFMSYCIMKVC. The Cytoplasmic portion of the chain corresponds to 419-444; it reads TGRWRDLNLCVVVVAALFALKIILVD.

The protein belongs to the nucleobase:cation symporter-2 (NCS2) (TC 2.A.40) family. Azg-like subfamily.

The protein resides in the cell inner membrane. Functionally, high-affinity transporter for adenine. The sequence is that of Adenine permease AdeQ (adeQ) from Escherichia coli (strain K12).